The sequence spans 217 residues: T-complex protein 10A homolog 1 (217 aa).

Positions methionine 1–alanine 26 are disordered. The span at glutamate 7–aspartate 19 shows a compositional bias: basic and acidic residues. Positions alanine 69–serine 110 form a coiled coil. The leucine-zipper stretch occupies residues leucine 75 to leucine 96. Positions glutamate 175–leucine 192 are enriched in basic and acidic residues. A disordered region spans residues glutamate 175–valine 217.

The protein belongs to the TCP10 family. In terms of assembly, self-associates (via leucine zipper). Interacts (via leucine zipper) with ZIPK/DAPK3 (via leucine zipper). Interacts with MAD4.

The protein localises to the nucleus. Its function is as follows. May be involved in transcriptional regulation. Has in vitro transcription inhibition activity. This is T-complex protein 10A homolog 1 (TCP10L) from Pan troglodytes (Chimpanzee).